The sequence spans 125 residues: MTDRESSRDKGRQAEELACAHLRRQGLATLGKNWTCRRGELDLVMLDGDTVVFVEVRSRRHRAWGGALESIDARKRQRLILSAELFLQQEARWAKRPCRFDVVTVDTSDGQSPPRLDWIQNAFDA.

It belongs to the UPF0102 family.

The chain is UPF0102 protein PA4424 from Pseudomonas aeruginosa (strain ATCC 15692 / DSM 22644 / CIP 104116 / JCM 14847 / LMG 12228 / 1C / PRS 101 / PAO1).